Consider the following 282-residue polypeptide: Protein-export membrane protein SecF (282 aa).

Transmembrane regions (helical) follow at residues 9–29 (IAIP…KGIP), 120–140 (EGFK…YLYF), 149–169 (IILS…LLGI), 174–194 (ATIA…ILLT), 214–234 (KTGL…LIVV), and 236–256 (LFIP…LALI).

Belongs to the SecD/SecF family. SecF subfamily. Part of the protein translocation apparatus. Forms a complex with SecD.

It localises to the cell membrane. In terms of biological role, involved in protein export. This is Protein-export membrane protein SecF from Methanocaldococcus jannaschii (strain ATCC 43067 / DSM 2661 / JAL-1 / JCM 10045 / NBRC 100440) (Methanococcus jannaschii).